A 62-amino-acid polypeptide reads, in one-letter code: Delta-theraphotoxin-Cg1a 1 (62 aa).

Residues 1 to 21 (MKTSILFVIFSLALLFALSAA) form the signal peptide. A propeptide spanning residues 22 to 29 (TEIEETDR) is cleaved from the precursor. Intrachain disulfides connect Cys31–Cys46, Cys38–Cys51, and Cys45–Cys58.

It belongs to the neurotoxin 10 (Hwtx-1) family. 33 (Jztx-1) subfamily. As to expression, expressed by the venom gland.

The protein localises to the secreted. In terms of biological role, inhibits voltage-gated sodium channels, preferentially subtype Nav1.5/SCN5A (in cardiac myocytes), but also Nav1.6/SCN8A and Nav1.7/SCN9A (TTX-sensitive Nav in rat DRG neurons) and invertebrate Nav (in insect neurons) as well as voltage-gated potassium channels of the subtype Kv2.1/KCNB1. Is suggested to bind to site 3 of the sodium channels and inhibit the inactivation of the activated channels, thereby blocking neuronal transmission. On potassium channels, inhibits activation of channels with an IC(50) of 8.05 uM through a voltage sensor-trapping mechanism. Increases muscle contraction in several assays (mouse phrenic nerve-diaphragm, toad heart, rat vas deferens) and is suggested to act both presynaptically and postsynaptically. Functionally, moderately inhibits voltage-gated sodium channels and weakly inhibits voltage-gated potassium channel. Inhibits the inactivation of rat Nav1.2/SCN2A (IC(50)=870 nM), rat Nav1.3/SCN3A (IC(50)=845 nM), rat Nav1.4/SCN4A (IC(50)=339 nM), human Nav1.5/SCN5A (IC(50)=335 nM) and human Nav1.7/SCN9A sodium channels (IC(50)=348 nM). The toxin delays the inactivation of sodium channels without affecting the activation and steady-state inactivation kinetics in the physiological range of voltages. Site-directed mutagenesis of the sodium channel indicates that the toxin interacts with site 3 located at the extracellular S3-S4 linker of domain IV. On potassium channels, it inhibits activation of channels with an IC(50) of 8.05 uM through a voltage sensor-trapping mechanism. It increases muscle contraction in several assays (mouse phrenic nerve-diaphragm, toad heart, rat vas deferens) and is suggested to act both presynaptically and postsynaptically. The protein is Delta-theraphotoxin-Cg1a 1 of Chilobrachys guangxiensis (Chinese earth tiger tarantula).